Here is a 511-residue protein sequence, read N- to C-terminus: Aldehyde dehydrogenase 2, mitochondrial (511 aa).

The transit peptide at 1-21 (MSKSKTKTDKRNQSSLSRIKL) directs the protein to the mitochondrion. Positions 72–92 (VSEKSQHDSTEEDITQVSEKS) are disordered. 274–279 (GSTLVG) provides a ligand contact to NAD(+). Catalysis depends on Glu297, which acts as the Proton acceptor. Cys331 functions as the Nucleophile in the catalytic mechanism.

Belongs to the aldehyde dehydrogenase family.

The protein resides in the mitochondrion matrix. The enzyme catalyses an aldehyde + NAD(+) + H2O = a carboxylate + NADH + 2 H(+). It functions in the pathway alcohol metabolism; ethanol degradation; acetate from ethanol: step 2/2. The sequence is that of Aldehyde dehydrogenase 2, mitochondrial (ALD2) from Saccharomyces cerevisiae (Baker's yeast).